We begin with the raw amino-acid sequence, 187 residues long: Calcium and integrin-binding family member 2 (187 aa).

EF-hand domains are found at residues 66–101, 103–138, and 144–179; these read RENP…LCES, PREL…LTKS, and EVVL…APDF. Positions 116, 118, 120, 127, 157, 159, 161, 163, and 168 each coordinate Ca(2+).

In terms of assembly, monomer. Homodimer. Interacts with WHRN and MYO7A. Interacts with ITGA2B (via C-terminus cytoplasmic tail region); the interactions are stabilized/increased in a calcium and magnesium-dependent manner. Interacts with ITGA7 (via C-terminus cytoplasmic tail region); the interactions are stabilized/increased in a calcium and magnesium-dependent manner. Interacts with TMC1. Interacts with TMC2. As to expression, widely expressed.

It localises to the cytoplasm. The protein resides in the cell projection. It is found in the stereocilium. Its subcellular location is the photoreceptor inner segment. The protein localises to the cilium. It localises to the photoreceptor outer segment. The protein resides in the cell membrane. It is found in the sarcolemma. Functionally, calcium- and integrin-binding protein that plays a role in intracellular calcium homeostasis. Acts as an auxiliary subunit of the sensory mechanoelectrical transduction (MET) channel in hair cells. Essential for mechanoelectrical transduction (MET) currents in auditory hair cells and thereby required for hearing. Regulates the function of hair cell mechanotransduction by controlling the distribution of transmembrane channel-like proteins TMC1 and TMC2, and by regulating the function of the MET channels in hair cells. Required for the maintenance of auditory hair cell stereocilia bundle morphology and function and for hair-cell survival in the cochlea. Critical for proper photoreceptor cell maintenance and function. Plays a role in intracellular calcium homeostasis by decreasing ATP-induced calcium release. This Homo sapiens (Human) protein is Calcium and integrin-binding family member 2 (CIB2).